A 343-amino-acid polypeptide reads, in one-letter code: L-threonine 3-dehydrogenase (343 aa).

Residue Cys-40 participates in Zn(2+) binding. Residues Thr-42 and His-45 each act as charge relay system in the active site. Positions 65, 66, 95, 98, 101, and 109 each coordinate Zn(2+). NAD(+) is bound by residues Ile-177, Asp-197, Arg-202, Leu-264–Ile-266, and Ile-288–Tyr-289.

This sequence belongs to the zinc-containing alcohol dehydrogenase family. Homotetramer. Zn(2+) is required as a cofactor.

The protein localises to the cytoplasm. The catalysed reaction is L-threonine + NAD(+) = (2S)-2-amino-3-oxobutanoate + NADH + H(+). It participates in amino-acid degradation; L-threonine degradation via oxydo-reductase pathway; glycine from L-threonine: step 1/2. Catalyzes the NAD(+)-dependent oxidation of L-threonine to 2-amino-3-ketobutyrate. The protein is L-threonine 3-dehydrogenase of Photobacterium profundum (strain SS9).